The chain runs to 657 residues: MTQLAIGKPAPLGAHYDGQGVNFTLFSAHAERVELCVFDANGQEHRYDLPGHSGDIWHGYLPDARPGLRYGYRVHGPWQPAEGHRFNPAKLLIDPCARQIEGEFKDNPLLHAGHNEPDYRDNAAIAPKCVVVVDHYDWEDDAPPRTPWGSTIIYEAHVKGLTYLHPEIPVEIRGTYKALGHPVMINYLKQLGITALELLPVAQFASEPRLQRMGLSNYWGYNPVAMFALHPAYACSPETALDEFRDAIKALHKAGIEVILDIVLNHSAELDLDGPLFSLRGIDNRSYYWIREDGDYHNWTGCGNTLNLSHPAVVDYASACLRYWVETCHVDGFRFDLAAVMGRTPEFRQDAPLFTAIQNCPVLSQVKLIAEPWDIAPGGYQVGNFPPLFAEWNDHFRDAARRFWLHYDLPLGAFAGRFAASSDVFKRNGRLPSAAINLVTAHDGFTLRDCVCFNHKHNEANGEENRDGTNNNYSNNHGKEGLGGSLDLVERRRDSIHALLTTLLLSQGTPMLLAGDEHGHSQHGNNNAYCQDNQLTWLDWSQASSGLTAFTAALIHLRKRIPALVENRWWEEGDGNVRWLNRYAQPLSTDEWQNGPKQLQILLSDRFLIAINATLEVTEIVLPAGEWHAIPPFAGEDNPVITAVWQGPAHGLCVFQR.

The Nucleophile role is filled by D336. E371 (proton donor) is an active-site residue. The segment covering 458 to 467 (NEANGEENRD) has biased composition (basic and acidic residues). Residues 458 to 479 (NEANGEENRDGTNNNYSNNHGK) form a disordered region.

Belongs to the glycosyl hydrolase 13 family.

The catalysed reaction is Hydrolysis of (1-&gt;6)-alpha-D-glucosidic linkages to branches with degrees of polymerization of three or four glucose residues in limit dextrin.. It participates in glycan degradation; glycogen degradation. Functionally, removes maltotriose and maltotetraose chains that are attached by 1,6-alpha-linkage to the limit dextrin main chain, generating a debranched limit dextrin. This chain is Glycogen debranching enzyme, found in Escherichia coli (strain 55989 / EAEC).